Here is a 753-residue protein sequence, read N- to C-terminus: MPYRVATGYSEKSTDDDLIWRTPIVKEELEDADNFLKDDAELYDKVKNESAVSHLDTIVMPIIFTVLGMFTRMYKIGRNNHVVWDEAHFGKFGSYYLRHEFYHDVHPPLGKMLVGLSGYLAGYNGSWDFPSGEVYPDYIDYVKMRLFQAMFSSLCVPLAYFTGRAIGFSRLSVWLFTILVIFENSYATLGKFILLDSMLLFFTVSSYFCLAKFHTMRKSPFSARWWLWLCLTGLNLGCAISVKMVGLFIISVVGIYTISELWNLLSDRSVSWKVYVNHWLARIFGLIIIPVCVFLLCFKIHFDLLSNSGPGDSTMPSLFQASLNGTKVGKGPRDVALGSSIISIKNQALGGALLHSHVQPFPEGSEQQQVTVYGYSDANNEWFFQRIRGVEPWTDAENKTIEFVKGGEMYRLMHRLTGKNLHTHEVPAPISKSEYEVSAYGDVDLGDYKDNWIIEIVEQVGEEDPTLLHPLSTSFRIKNSILGCYLAQSGKHLPEWGFRQGEVVCLKHASKRDKRTWWNIETHENERLPQGEDFVYPKTSFFRNFMQLNSAMMATNNALVPNPEKFDGIASSAWQWPTLNVGVRLCEWSEKSIKYFLLGSPASVWPSSIAVCALIIHVIFLTLKWQRQCVILSDPVERDVFVMAAFYPLLAWLLHYMPFVVMSRVVYAHHYLPTLYFALMILSYYFDMITKRWATRNTGKFLRLGAYIVYGSIVIAGFFYFSPFSFGMDGPVDDYAYLAWLPTWQIVEDIRNT.

Topologically, residues 1–50 are cytoplasmic; sequence MPYRVATGYSEKSTDDDLIWRTPIVKEELEDADNFLKDDAELYDKVKNES. The chain crosses the membrane as a helical span at residues 51–71; that stretch reads AVSHLDTIVMPIIFTVLGMFT. Residues 72 to 148 lie on the Lumenal side of the membrane; it reads RMYKIGRNNH…IDYVKMRLFQ (77 aa). An N-linked (GlcNAc...) asparagine glycan is attached at N124. Residues 149–169 traverse the membrane as a helical segment; the sequence is AMFSSLCVPLAYFTGRAIGFS. Residues 170–174 lie on the Cytoplasmic side of the membrane; it reads RLSVW. The chain crosses the membrane as a helical span at residues 175–195; sequence LFTILVIFENSYATLGKFILL. Residues 196-235 lie on the Lumenal side of the membrane; the sequence is DSMLLFFTVSSYFCLAKFHTMRKSPFSARWWLWLCLTGLN. The chain crosses the membrane as a helical span at residues 236 to 256; that stretch reads LGCAISVKMVGLFIISVVGIY. Residues 257 to 282 are Cytoplasmic-facing; the sequence is TISELWNLLSDRSVSWKVYVNHWLAR. The helical transmembrane segment at 283 to 303 threads the bilayer; the sequence is IFGLIIIPVCVFLLCFKIHFD. Over 304–602 the chain is Lumenal; it reads LLSNSGPGDS…IKYFLLGSPA (299 aa). N-linked (GlcNAc...) asparagine glycosylation occurs at N324. In terms of domain architecture, MIR 1 spans 332 to 387; sequence PRDVALGSSIISIKNQALGGALLHSHVQPFPEGSEQQQVTVYGYSDANNEWFFQRI. N398 carries an N-linked (GlcNAc...) asparagine glycan. 2 MIR domains span residues 401–457 and 465–523; these read IEFV…IEIV and PTLL…IETH. A helical membrane pass occupies residues 603–623; it reads SVWPSSIAVCALIIHVIFLTL. Residues 624 to 639 lie on the Cytoplasmic side of the membrane; sequence KWQRQCVILSDPVERD. Residues 640 to 660 traverse the membrane as a helical segment; the sequence is VFVMAAFYPLLAWLLHYMPFV. The Lumenal portion of the chain corresponds to 661 to 665; it reads VMSRV. The helical transmembrane segment at 666 to 686 threads the bilayer; it reads VYAHHYLPTLYFALMILSYYF. Residues 687 to 703 are Cytoplasmic-facing; that stretch reads DMITKRWATRNTGKFLR. A helical transmembrane segment spans residues 704–724; sequence LGAYIVYGSIVIAGFFYFSPF. The Lumenal portion of the chain corresponds to 725-753; it reads SFGMDGPVDDYAYLAWLPTWQIVEDIRNT.

It belongs to the glycosyltransferase 39 family. As to quaternary structure, PMT3 and PMT5 form a functional heterodimer. Also forms a minor complex with PMT1.

The protein localises to the endoplasmic reticulum membrane. The catalysed reaction is a di-trans,poly-cis-dolichyl beta-D-mannosyl phosphate + L-seryl-[protein] = 3-O-(alpha-D-mannosyl)-L-seryl-[protein] + a di-trans,poly-cis-dolichyl phosphate + H(+). It catalyses the reaction a di-trans,poly-cis-dolichyl beta-D-mannosyl phosphate + L-threonyl-[protein] = 3-O-(alpha-D-mannosyl)-L-threonyl-[protein] + a di-trans,poly-cis-dolichyl phosphate + H(+). Its pathway is protein modification; protein glycosylation. In terms of biological role, protein O-mannosyltransferase involved in O-glycosylation which is essential for cell wall rigidity. Forms a heterodimeric complex with PMT5 and more rarely with PMT1 to transfer mannose from Dol-P-mannose to Ser or Thr residues on proteins. Seems to have redundant activity to PMT2. This Saccharomyces cerevisiae (strain ATCC 204508 / S288c) (Baker's yeast) protein is Dolichyl-phosphate-mannose--protein mannosyltransferase 3.